The following is a 373-amino-acid chain: Cobalt-precorrin-5B C(1)-methyltransferase (373 aa).

Belongs to the CbiD family.

The enzyme catalyses Co-precorrin-5B + S-adenosyl-L-methionine = Co-precorrin-6A + S-adenosyl-L-homocysteine. Its pathway is cofactor biosynthesis; adenosylcobalamin biosynthesis; cob(II)yrinate a,c-diamide from sirohydrochlorin (anaerobic route): step 6/10. Its function is as follows. Catalyzes the methylation of C-1 in cobalt-precorrin-5B to form cobalt-precorrin-6A. This Polaromonas sp. (strain JS666 / ATCC BAA-500) protein is Cobalt-precorrin-5B C(1)-methyltransferase.